Consider the following 86-residue polypeptide: Sulmotoxin 2 (86 aa).

The N-terminal stretch at 1 to 21 is a signal peptide; that stretch reads MKTLLLALAVVAFMCLDSVYP. 5 disulfide bridges follow: Cys-24/Cys-47, Cys-27/Cys-35, Cys-41/Cys-62, Cys-66/Cys-77, and Cys-78/Cys-83.

Belongs to the three-finger toxin family. Ancestral subfamily. Boigatoxin sub-subfamily. In terms of assembly, monomer. In terms of tissue distribution, expressed by the venom gland.

It is found in the secreted. Its function is as follows. Probable neurotoxin. Is not toxic to mice and geckos. The chain is Sulmotoxin 2 from Spilotes sulphureus (Amazon puffing snake).